The sequence spans 485 residues: Membrane-bound lytic murein transglycosylase F (485 aa).

The first 29 residues, 1-29 (MFAHTALRQRCAKWLFATGLFLLLGACVE), serve as a signal peptide directing secretion. Residues 30 to 267 (KPSTLERVKE…RLKDRYYGHV (238 aa)) are non-LT domain. Residues 268–485 (DVLGYVGAYT…DKPAEQSPPM (218 aa)) form an LT domain region. The active site involves glutamate 314. The segment at 465 to 485 (EGNLHVPGVNKDKPAEQSPPM) is disordered.

In the N-terminal section; belongs to the bacterial solute-binding protein 3 family. This sequence in the C-terminal section; belongs to the transglycosylase Slt family.

It localises to the cell outer membrane. It carries out the reaction Exolytic cleavage of the (1-&gt;4)-beta-glycosidic linkage between N-acetylmuramic acid (MurNAc) and N-acetylglucosamine (GlcNAc) residues in peptidoglycan, from either the reducing or the non-reducing ends of the peptidoglycan chains, with concomitant formation of a 1,6-anhydrobond in the MurNAc residue.. In terms of biological role, murein-degrading enzyme that degrades murein glycan strands and insoluble, high-molecular weight murein sacculi, with the concomitant formation of a 1,6-anhydromuramoyl product. Lytic transglycosylases (LTs) play an integral role in the metabolism of the peptidoglycan (PG) sacculus. Their lytic action creates space within the PG sacculus to allow for its expansion as well as for the insertion of various structures such as secretion systems and flagella. In Pseudomonas putida (strain W619), this protein is Membrane-bound lytic murein transglycosylase F.